The following is a 100-amino-acid chain: Urease subunit gamma (100 aa).

This sequence belongs to the urease gamma subunit family. As to quaternary structure, heterotrimer of UreA (gamma), UreB (beta) and UreC (alpha) subunits. Three heterotrimers associate to form the active enzyme.

The protein resides in the cytoplasm. The enzyme catalyses urea + 2 H2O + H(+) = hydrogencarbonate + 2 NH4(+). The protein operates within nitrogen metabolism; urea degradation; CO(2) and NH(3) from urea (urease route): step 1/1. The protein is Urease subunit gamma of Cupriavidus pinatubonensis (strain JMP 134 / LMG 1197) (Cupriavidus necator (strain JMP 134)).